A 106-amino-acid polypeptide reads, in one-letter code: Small ribosomal subunit protein uS10 (106 aa).

This sequence belongs to the universal ribosomal protein uS10 family. As to quaternary structure, part of the 30S ribosomal subunit.

In terms of biological role, involved in the binding of tRNA to the ribosomes. This Wolbachia sp. subsp. Drosophila simulans (strain wRi) protein is Small ribosomal subunit protein uS10.